The following is a 143-amino-acid chain: Large ribosomal subunit protein uL13 (143 aa).

Belongs to the universal ribosomal protein uL13 family. Part of the 50S ribosomal subunit.

Its function is as follows. This protein is one of the early assembly proteins of the 50S ribosomal subunit, although it is not seen to bind rRNA by itself. It is important during the early stages of 50S assembly. The sequence is that of Large ribosomal subunit protein uL13 from Coprothermobacter proteolyticus (strain ATCC 35245 / DSM 5265 / OCM 4 / BT).